Here is a 391-residue protein sequence, read N- to C-terminus: ATP-sensitive inward rectifier potassium channel 1 (391 aa).

Over 1-77 (MNASSRNVFD…IWTTVLDLKW (77 aa)) the chain is Cytoplasmic. Position 44 is a phosphoserine; by SGK1 (Ser-44). The chain crosses the membrane as a helical span at residues 78-102 (RYKMTIFITAFLGSWFFFGLLWYAV). Residues 103 to 127 (AYIHKDLPEFHPSANHTPCVENING) lie on the Extracellular side of the membrane. Asn-117 is a glycosylation site (N-linked (GlcNAc...) asparagine). Positions 128-139 (LTSAFLFSLETQ) form an intramembrane region, helical; Pore-forming. Residues 140 to 146 (VTIGYGF) constitute an intramembrane region (pore-forming). Positions 141–146 (TIGYGF) match the Selectivity filter motif. At 147–155 (RCVTEQCAT) the chain is on the extracellular side. A helical transmembrane segment spans residues 156–177 (AIFLLIFQSILGVIINSFMCGA). Residues 178-391 (ILAKISRPKK…EVNETDDTKM (214 aa)) lie on the Cytoplasmic side of the membrane. A polyphosphoinositide (PIP2)-binding region spans residues 180 to 207 (AKISRPKKRAKTITFSKNAVISKRGGKL). 223–230 (GSHIYGKL) contacts ATP.

It belongs to the inward rectifier-type potassium channel (TC 1.A.2.1) family. KCNJ1 subfamily. As to quaternary structure, interacts with SGK1 and SLC9A3R2/NHERF2. In terms of processing, phosphorylation at Ser-44 by SGK1 is necessary for its expression at the cell membrane. In the kidney and pancreatic islets. Lower levels in skeletal muscle, pancreas, spleen, brain, heart and liver.

The protein resides in the cell membrane. It carries out the reaction K(+)(in) = K(+)(out). Inhibited by WNK3. Activated by phosphatidylinositol 4,5 biphosphate (PtdIns(4,5)P2). Functionally, inward rectifier potassium channels are characterized by a greater tendency to allow potassium to flow into the cell rather than out of it. Their voltage dependence is regulated by the concentration of extracellular potassium; as external potassium is raised, the voltage range of the channel opening shifts to more positive voltages. The inward rectification is mainly due to the blockage of outward current by internal magnesium. This channel is activated by internal ATP and can be blocked by external barium. In the kidney, probably plays a major role in potassium homeostasis. In Homo sapiens (Human), this protein is ATP-sensitive inward rectifier potassium channel 1 (KCNJ1).